The primary structure comprises 171 residues: Myelin basic protein (171 aa).

The residue at position 1 (A1) is an N-acetylalanine. Residues S7 and S12 each carry the phosphoserine modification. Position 14 is a phosphotyrosine (Y14). The residue at position 17 (T17) is a Phosphothreonine. Position 19 is a phosphoserine (S19). Residue T20 is modified to Phosphothreonine. Residues R25 and R31 each carry the citrulline modification. The residue at position 35 (T35) is a Phosphothreonine. A Phosphoserine modification is found at S40. An omega-N-methylarginine mark is found at R43 and R49. The segment at 44–115 (FFGGDRGAPK…GRGLSLSRFS (72 aa)) is disordered. S56 is modified (phosphoserine). At Y69 the chain carries Phosphotyrosine. The residue at position 76 (S76) is a Phosphoserine. Residues T80, T95, and T98 each carry the phosphothreonine modification. Q103 is modified (deamidated glutamine). An Omega-N-methylarginine; alternate modification is found at R107. R107 carries the post-translational modification Symmetric dimethylarginine; alternate. At S115 the chain carries Phosphoserine. Citrulline occurs at positions 122 and 130. Q148 is modified (deamidated glutamine). R160 bears the Citrulline mark. At S162 the chain carries Phosphoserine. S166 is modified (phosphoserine; by UHMK1). A Citrulline modification is found at R171.

The protein belongs to the myelin basic protein family. Homodimer. As in other animals, several charge isomers may be produced as a result of optional post-translational modifications, such as phosphorylation of serine or threonine residues, deamidation of glutamine or asparagine residues, citrullination and methylation of arginine residues. Post-translationally, phosphorylated by TAOK2, VRK2, MAPK11, MAPK12, MAPK14 and MINK1. In terms of processing, proteolytically cleaved in B cell lysosomes by cathepsin CTSG which degrades the major immunogenic MBP epitope and prevents the activation of MBP-specific autoreactive T cells.

It is found in the myelin membrane. In terms of biological role, is, with PLP, the most abundant protein component of the myelin membrane in the CNS. Has a role in both the formation and stabilization of this compact multilayer arrangement of bilayers. Each splice variant and charge isomer may have a specialized function in the assembly of an optimized, biochemically functional myelin membrane. The chain is Myelin basic protein (MBP) from Pan troglodytes (Chimpanzee).